Consider the following 430-residue polypeptide: C4-dicarboxylate transport protein (430 aa).

9 helical membrane-spanning segments follow: residues 8–28, 44–64, 76–96, 144–164, 184–204, 222–242, 289–309, 326–346, and 352–372; these read SLYFQVLTAITLGVLLGHFYP, LIKMIIAPVIFCTVVTGIAGM, IALLYFEIVSTIALLIGLVIV, AFASGNILQVLLFAVLFGFAL, VIFGIINMIMRLAPIGAFGAM, LIICFYITCVLFVVVVLGSIA, VVGLVIPTGYSFNLDGTSIYL, VIHQVTLLVVLLLSSKGAAGV, and IVLAATISAVGHLPLAGLALI.

This sequence belongs to the dicarboxylate/amino acid:cation symporter (DAACS) (TC 2.A.23) family.

The protein localises to the cell inner membrane. Its function is as follows. Responsible for the transport of dicarboxylates such as succinate, fumarate, and malate from the periplasm across the membrane. The polypeptide is C4-dicarboxylate transport protein (Yersinia enterocolitica serotype O:8 / biotype 1B (strain NCTC 13174 / 8081)).